The primary structure comprises 274 residues: Large ribosomal subunit protein uL2 (274 aa).

Disordered stretches follow at residues 28-54 and 224-274; these read APHA…TRHI and VAMN…RRRK. The span at 263–274 shows a compositional bias: basic and acidic residues; it reads KRTDKMIVRRRK.

It belongs to the universal ribosomal protein uL2 family. As to quaternary structure, part of the 50S ribosomal subunit. Forms a bridge to the 30S subunit in the 70S ribosome.

Its function is as follows. One of the primary rRNA binding proteins. Required for association of the 30S and 50S subunits to form the 70S ribosome, for tRNA binding and peptide bond formation. It has been suggested to have peptidyltransferase activity; this is somewhat controversial. Makes several contacts with the 16S rRNA in the 70S ribosome. This is Large ribosomal subunit protein uL2 from Pseudomonas savastanoi pv. phaseolicola (strain 1448A / Race 6) (Pseudomonas syringae pv. phaseolicola (strain 1448A / Race 6)).